Here is a 722-residue protein sequence, read N- to C-terminus: Transmembrane channel-like protein 8 (722 aa).

The disordered stretch occupies residues 1-21 (MFRQWSVQSGPAPRRPESQAA). Residues 1–118 (MFRQWSVQSG…GIQSYFTFLR (118 aa)) lie on the Cytoplasmic side of the membrane. A phosphoserine mark is found at Ser6 and Ser18. A helical membrane pass occupies residues 119–139 (FLLLLNLLTMLLTACFVLLPL). At 140 to 204 (VWLRPPELGP…AGPESSSEYS (65 aa)) the chain is on the lumenal side. N-linked (GlcNAc...) asparagine glycosylation occurs at Asn184. The helical transmembrane segment at 205–225 (IRLAYLLSPMVCLLLCFCGIL) threads the bilayer. At 226–307 (QRMAEGLPQQ…CRLLTYLRTN (82 aa)) the chain is on the cytoplasmic side. Residues 308-328 (ILIVLLVVGAISAIFWATKYS) form a helical membrane-spanning segment. At 329 to 375 (QDNKEESLFLVLQYLPPGVISLVNFLGPQLFTVLIQLENYPPGTEVN) the chain is on the lumenal side. Residues 366–534 (ENYPPGTEVN…SPRRFRASSS (169 aa)) are TMC domain. The N-linked (GlcNAc...) asparagine glycan is linked to Asn375. Residues 376 to 396 (LTLIWCVVLKLASLGMFSFSL) form a helical membrane-spanning segment. The Cytoplasmic portion of the chain corresponds to 397–430 (GQTVLCIGRNKTSCESYGYNACDYQCWENSVGEE). A helical membrane pass occupies residues 431–451 (LYKLIIFNFLLTVAFAFLVSL). Residues 452 to 492 (PRRLLVERFSGWFWTWLDREEFLVPKNVLDIVAAQTVTWMG) are Lumenal-facing. Residues 493–513 (LFYCPLLPLLNSVFLFLTFYI) traverse the membrane as a helical segment. Over 514 to 536 (KKYTLLRNSRASPRRFRASSSTF) the chain is Cytoplasmic. A helical membrane pass occupies residues 537–557 (FFHLVLLLGLLLAAVPLAYVI). Topologically, residues 558–598 (SSTHSSWDCGLFTNYSAPWQVVPELVALQLPLPSQRALRYL) are lumenal. Residue Asn571 is glycosylated (N-linked (GlcNAc...) asparagine). A helical membrane pass occupies residues 599-619 (SSHAFSFPLLILLSIVLTVCI). The Cytoplasmic portion of the chain corresponds to 620–722 (SQSRANARAI…RFHFPSRTEL (103 aa)). Phosphoserine occurs at positions 658, 663, and 673. A disordered region spans residues 658 to 722 (SPEPGSPHSR…RFHFPSRTEL (65 aa)). A compositionally biased stretch (pro residues) spans 678-687 (FPCPGSPGPR). A compositionally biased stretch (low complexity) spans 689 to 712 (PRLAPSNRLSSSSLGAPSASVPAS). At Ser698 the chain carries Phosphoserine.

Belongs to the TMC family. In terms of assembly, interacts with TMC6. Interacts and forms a complex with TMC6 and CIB1; the interaction stabilizes each component of the complex. Interacts and forms a complex with TMC6 and SLC30A1/ZNT1; the interaction regulates zinc transport into the ER. Interacts with TRADD; the interaction competes with TRADD/RIPK1/TRAF2/cIAPs complex I formation and facilites complex II formation. Expressed in thymus, lung, prostate, placenta, testis and spleen. Expressed in lymphocytes and peripheral lymphocytes.

It is found in the endoplasmic reticulum membrane. The protein localises to the golgi apparatus membrane. It localises to the nucleus membrane. Acts as a regulatory protein involved in the regulation of numerous cellular processes. Together with its homolog TMC6/EVER1, forms a complex with calcium-binding protein CIB1 in lymphocytes and keratynocytes where TMC6 and TMC8 stabilize CIB1 levels and reciprocally. Together with TMC6, also forms a complex with and activates zinc transporter ZNT1 at the ER membrane of keratynocytes, thereby facilitating zinc uptake into the ER. Also inhibits receptor-mediated calcium release from ER stores and calcium activated and volume regulated chloride channels. Down-regulates the activity of transcription factors induced by zinc and cytokines. Also sequesters TRADD which impairs the recruitment of TRAF2 and RIPK1 in the pro-survival complex I and promotes proapoptotic complex II formation, and may therefore be involved in TNF-induced cell death/survival decisions. The sequence is that of Transmembrane channel-like protein 8 from Mus musculus (Mouse).